Reading from the N-terminus, the 187-residue chain is Translation initiation factor IF-3 (187 aa).

It belongs to the IF-3 family. As to quaternary structure, monomer.

It localises to the cytoplasm. IF-3 binds to the 30S ribosomal subunit and shifts the equilibrium between 70S ribosomes and their 50S and 30S subunits in favor of the free subunits, thus enhancing the availability of 30S subunits on which protein synthesis initiation begins. This Leptospira biflexa serovar Patoc (strain Patoc 1 / Ames) protein is Translation initiation factor IF-3.